We begin with the raw amino-acid sequence, 362 residues long: S-adenosylmethionine decarboxylase proenzyme (362 aa).

Catalysis depends on residues Glu-11 and Glu-14. Catalysis depends on Ser-71, which acts as the Schiff-base intermediate with substrate; via pyruvic acid. Pyruvic acid (Ser); by autocatalysis is present on Ser-71. The Proton donor; for catalytic activity role is filled by Cys-85. Active-site proton acceptor; for processing activity residues include Ser-234 and His-247.

Belongs to the eukaryotic AdoMetDC family. The cofactor is pyruvate. Is synthesized initially as an inactive proenzyme. Formation of the active enzyme involves a self-maturation process in which the active site pyruvoyl group is generated from an internal serine residue via an autocatalytic post-translational modification. Two non-identical subunits are generated from the proenzyme in this reaction, and the pyruvate is formed at the N-terminus of the alpha chain, which is derived from the carboxyl end of the proenzyme. The post-translation cleavage follows an unusual pathway, termed non-hydrolytic serinolysis, in which the side chain hydroxyl group of the serine supplies its oxygen atom to form the C-terminus of the beta chain, while the remainder of the serine residue undergoes an oxidative deamination to produce ammonia and the pyruvoyl group blocking the N-terminus of the alpha chain.

The enzyme catalyses S-adenosyl-L-methionine + H(+) = S-adenosyl 3-(methylsulfanyl)propylamine + CO2. It functions in the pathway amine and polyamine biosynthesis; S-adenosylmethioninamine biosynthesis; S-adenosylmethioninamine from S-adenosyl-L-methionine: step 1/1. The chain is S-adenosylmethionine decarboxylase proenzyme (SAMDC) from Ipomoea nil (Japanese morning glory).